The primary structure comprises 234 residues: S-adenosylmethionine synthase 1 (234 aa).

Residues 10–12, 78–81, aspartate 89, 95–96, alanine 112, lysine 116, and lysine 120 each bind ATP; these read DGK, SGRF, and RK. Aspartate 89 lines the L-methionine pocket. Lysine 120 contacts L-methionine.

The protein belongs to the AdoMet synthase family. In terms of assembly, homotetramer. Mn(2+) serves as cofactor. The cofactor is Mg(2+). Co(2+) is required as a cofactor. It depends on K(+) as a cofactor. As to expression, mainly in floral buds and roots.

It localises to the cytoplasm. It carries out the reaction L-methionine + ATP + H2O = S-adenosyl-L-methionine + phosphate + diphosphate. It functions in the pathway amino-acid biosynthesis; S-adenosyl-L-methionine biosynthesis; S-adenosyl-L-methionine from L-methionine: step 1/1. Functionally, catalyzes the formation of S-adenosylmethionine from methionine and ATP. The reaction comprises two steps that are both catalyzed by the same enzyme: formation of S-adenosylmethionine (AdoMet) and triphosphate, and subsequent hydrolysis of the triphosphate. This Petroselinum crispum (Parsley) protein is S-adenosylmethionine synthase 1 (SMS-1).